Consider the following 509-residue polypeptide: Probable Xaa-Pro aminopeptidase MAC_04092 (509 aa).

Residues Asp-273, Asp-284, Glu-437, and Glu-478 each coordinate Mn(2+).

The protein belongs to the peptidase M24B family. Requires Mn(2+) as cofactor.

The catalysed reaction is Release of any N-terminal amino acid, including proline, that is linked to proline, even from a dipeptide or tripeptide.. Catalyzes the removal of a penultimate prolyl residue from the N-termini of peptides. This chain is Probable Xaa-Pro aminopeptidase MAC_04092, found in Metarhizium acridum (strain CQMa 102).